The sequence spans 307 residues: Nuclear polyadenylated RNA-binding protein nab2 (307 aa).

The tract at residues 102-135 (STDKSQQSFSVPETSIQPQSSQTPNITSLREEKE) is disordered. A compositionally biased stretch (polar residues) spans 105-129 (KSQQSFSVPETSIQPQSSQTPNITS). 3 consecutive C3H1-type zinc fingers follow at residues 178–202 (TQEVPLCKYADKCSRANCIFAHPTP), 217–232 (CASGKECKAADCVKGH), and 254–268 (CKYKPCLNPACRFIH). Residues 274-307 (NMTWRPPSKTEETSLSERSFAVNESEEQLHVPSV) are disordered.

The protein belongs to the ZC3H14 family.

The protein localises to the nucleus. Its function is as follows. RNA-binding protein involved in RNA processing. Acts as a regulator of mRNA stability: binds to mRNAs and pre-mRNAs, preventing their degradation. Involved in the biogenesis of circular RNAs (circRNAs) which are produced by back-splicing circularization of pre-mRNAs. This chain is Nuclear polyadenylated RNA-binding protein nab2, found in Schizosaccharomyces pombe (strain 972 / ATCC 24843) (Fission yeast).